A 927-amino-acid chain; its full sequence is Phospholipase D beta 2 (927 aa).

A C2 domain is found at 104-237; that stretch reads PFGKASLKVL…YSGARIEGTY (134 aa). Position 299 (Asp-299) interacts with Ca(2+). The 36-residue stretch at 439–474 folds into the PLD phosphodiesterase 1 domain; the sequence is TIYTHHQKNLIVDADAGGNRRKIVAFVGGLDLCDGR. Active-site residues include His-444, Lys-446, and Asp-451. A 1,2-diacyl-sn-glycero-3-phosphate is bound at residue His-444. 2 residues coordinate Ca(2+): His-480 and His-512. Gln-640 and His-778 together coordinate a 1,2-diacyl-sn-glycero-3-phosphate. A PLD phosphodiesterase 2 domain is found at 773-800; sequence FMIYVHSKGMVVDDEYVVIGSANINQRS. Active-site residues include His-778, Lys-780, and Asp-785. Residue Glu-841 coordinates Ca(2+).

This sequence belongs to the phospholipase D family. C2-PLD subfamily. It depends on Ca(2+) as a cofactor. Expressed in stems, and to a lower amount in leaves, flowers and siliques.

It is found in the cytoplasm. It localises to the membrane. The enzyme catalyses a 1,2-diacyl-sn-glycero-3-phosphocholine + H2O = a 1,2-diacyl-sn-glycero-3-phosphate + choline + H(+). Inhibited by neomycin. Hydrolyzes glycerol-phospholipids at the terminal phosphodiesteric bond to generate phosphatidic acids (PA). Plays an important role in various cellular processes, including phytohormone action, vesicular trafficking, secretion, cytoskeletal arrangement, meiosis, tumor promotion, pathogenesis, membrane deterioration and senescence. Can use phosphatidylserine or N-acylphosphatidylethanolamine as substrates. The chain is Phospholipase D beta 2 from Arabidopsis thaliana (Mouse-ear cress).